The chain runs to 195 residues: Dynactin subunit 6 (195 aa).

This sequence belongs to the dynactin subunits 5/6 family. Dynactin subunit 6 subfamily. As to quaternary structure, member of the pointed-end complex of the dynactin shoulder complex which contains dctn4, dctn5 and dctn6 subunits and Actr10. Within the complex dctn6 forms a heterodimer with dctn5. Interacts with plk1.

It is found in the cytoplasm. The protein localises to the cytoskeleton. It localises to the chromosome. Its subcellular location is the centromere. The protein resides in the kinetochore. Its function is as follows. Part of the dynactin complex that activates the molecular motor dynein for ultra-processive transport along microtubules. The chain is Dynactin subunit 6 (dctn6) from Danio rerio (Zebrafish).